We begin with the raw amino-acid sequence, 473 residues long: UDP-N-acetylmuramate--L-alanine ligase (473 aa).

G123 to S129 contributes to the ATP binding site.

It belongs to the MurCDEF family.

The protein resides in the cytoplasm. The catalysed reaction is UDP-N-acetyl-alpha-D-muramate + L-alanine + ATP = UDP-N-acetyl-alpha-D-muramoyl-L-alanine + ADP + phosphate + H(+). Its pathway is cell wall biogenesis; peptidoglycan biosynthesis. Cell wall formation. The polypeptide is UDP-N-acetylmuramate--L-alanine ligase (Prochlorococcus marinus subsp. pastoris (strain CCMP1986 / NIES-2087 / MED4)).